The primary structure comprises 327 residues: GMP reductase (327 aa).

The active-site Thioimidate intermediate is the Cys-176. 205–228 (IIADGGIRTHGDIAKSIRFGASMV) contacts NADP(+).

This sequence belongs to the IMPDH/GMPR family. GuaC type 2 subfamily.

The enzyme catalyses IMP + NH4(+) + NADP(+) = GMP + NADPH + 2 H(+). In terms of biological role, catalyzes the irreversible NADPH-dependent deamination of GMP to IMP. It functions in the conversion of nucleobase, nucleoside and nucleotide derivatives of G to A nucleotides, and in maintaining the intracellular balance of A and G nucleotides. This chain is GMP reductase, found in Streptococcus suis (strain 98HAH33).